The chain runs to 135 residues: Fluoride-specific ion channel FluC (135 aa).

4 helical membrane-spanning segments follow: residues Ile-7–Ala-27, Ile-37–Val-57, Phe-70–Phe-90, and Leu-105–Leu-125. The Na(+) site is built by Gly-77 and Ser-80.

This sequence belongs to the fluoride channel Fluc/FEX (TC 1.A.43) family.

Its subcellular location is the cell inner membrane. It catalyses the reaction fluoride(in) = fluoride(out). Na(+) is not transported, but it plays an essential structural role and its presence is essential for fluoride channel function. Fluoride-specific ion channel. Important for reducing fluoride concentration in the cell, thus reducing its toxicity. This chain is Fluoride-specific ion channel FluC, found in Xanthomonas oryzae pv. oryzae (strain MAFF 311018).